The primary structure comprises 209 residues: MSERGLLIVFSGPSGVGKGTVRQEIFSKSDHKFEYSVSMTTRAQRPGEVDGKDYFFRSREEFEELIRNGQMLEYAEYVGNYYGTPLAYVNETLDKGIDVFLEIEVQGALQVKKKVPDAVFIFLTPPDLNELEERLVGRGTDSEEVIAQRIERAREEIALMSEYDYTIVNDEVPLAAERVKRVIEAEHFRVERVIGHYRNMISDKRLSDK.

In terms of domain architecture, Guanylate kinase-like spans 5 to 184; the sequence is GLLIVFSGPS…AAERVKRVIE (180 aa). An ATP-binding site is contributed by 12–19; it reads GPSGVGKG.

Belongs to the guanylate kinase family.

The protein localises to the cytoplasm. It carries out the reaction GMP + ATP = GDP + ADP. In terms of biological role, essential for recycling GMP and indirectly, cGMP. This chain is Guanylate kinase, found in Streptococcus thermophilus (strain CNRZ 1066).